The primary structure comprises 187 residues: Chlorobenzene dioxygenase subunit beta (187 aa).

The protein belongs to the bacterial ring-hydroxylating dioxygenase beta subunit family. As to quaternary structure, this dioxygenase system consists of four proteins: the two subunits of the oxygenase component (TecA1 and TecA2), a ferredoxin (TecA3) and a ferredoxin reductase (TecA4).

The enzyme catalyses chlorobenzene + NADH + O2 + H(+) = (1R,2R)-3-chlorocyclohexa-3,5-diene-1,2-diol + NAD(+). The protein operates within aromatic compound metabolism. Its function is as follows. Part of the oxygenase component of the chlorobenzene dioxygenase system that catalyzes the dihydroxylation of a range of aromatic compounds, including chlorinated benzenes and toluenes, and dinuclear aromatics such as biphenyl and dibenzo-p-dioxin. The beta subunit is not directly involved in the control of substrate specificity. The sequence is that of Chlorobenzene dioxygenase subunit beta from Cupriavidus sp. (strain PS12).